The following is a 740-amino-acid chain: 1,4-alpha-glucan branching enzyme GlgB (740 aa).

Asp419 serves as the catalytic Nucleophile. The active-site Proton donor is Glu472.

This sequence belongs to the glycosyl hydrolase 13 family. GlgB subfamily. As to quaternary structure, monomer.

The catalysed reaction is Transfers a segment of a (1-&gt;4)-alpha-D-glucan chain to a primary hydroxy group in a similar glucan chain.. It participates in glycan biosynthesis; glycogen biosynthesis. In terms of biological role, catalyzes the formation of the alpha-1,6-glucosidic linkages in glycogen by scission of a 1,4-alpha-linked oligosaccharide from growing alpha-1,4-glucan chains and the subsequent attachment of the oligosaccharide to the alpha-1,6 position. The chain is 1,4-alpha-glucan branching enzyme GlgB from Paramagnetospirillum magneticum (strain ATCC 700264 / AMB-1) (Magnetospirillum magneticum).